The primary structure comprises 120 residues: Anti-adapter protein IraM (120 aa).

It belongs to the IraM/RssC family.

The protein resides in the cytoplasm. Involved in the stabilization of the sigma stress factor RpoS. This chain is Anti-adapter protein IraM, found in Salmonella choleraesuis (strain SC-B67).